We begin with the raw amino-acid sequence, 239 residues long: Probable 2-phosphosulfolactate phosphatase (239 aa).

Belongs to the ComB family. The cofactor is Mg(2+).

It catalyses the reaction (2R)-O-phospho-3-sulfolactate + H2O = (2R)-3-sulfolactate + phosphate. In Clostridium botulinum (strain Okra / Type B1), this protein is Probable 2-phosphosulfolactate phosphatase.